Consider the following 400-residue polypeptide: Lysophospholipid transporter LplT (400 aa).

12 consecutive transmembrane segments (helical) span residues 19–39 (VIVA…ATLA), 53–73 (VLQM…GQIA), 91–111 (AGAA…LVGI), 139–159 (LMEA…GVLA), 164–184 (IAAL…NLFI), 195–213 (SWRL…VVLW), 227–247 (LFWG…PVAL), 257–277 (YLNA…AKLV), 281–301 (TVSR…IFSL), 304–324 (ALLP…FFVV), 352–372 (NSAM…GVPA), and 373–393 (VAIG…LWIW).

Belongs to the major facilitator superfamily. LplT (TC 2.A.1.42) family.

It localises to the cell inner membrane. Catalyzes the facilitated diffusion of 2-acyl-glycero-3-phosphoethanolamine (2-acyl-GPE) into the cell. In Salmonella typhi, this protein is Lysophospholipid transporter LplT.